A 501-amino-acid chain; its full sequence is ADP,ATP carrier protein 3 (501 aa).

A run of 12 helical transmembrane segments spans residues 23–43 (LKLFIPMALMMLCILFNFGAL), 59–79 (IISFLKLWLVLPSCVIFTVLY), 90–110 (YIFYSIVGTFLLFFLLFAYII), 146–166 (YALMYIFSELWSAVVINLMFW), 183–203 (PVLGMIGNIGLIIAGSVLVFF), 227–247 (IILQPIISIIVTAGIIAMFLF), 293–313 (IALLIICYGLLINIVEGPWKA), 326–346 (VNFMGMFNIWMGISCVTFMII), 361–381 (LLTPIMLSITGFIFFIFIIFI), 383–403 (EIGTCFGDFNLLYVAIIVGAI), 446–466 (FGKSLGAFIQSLIFIIIPTAT), and 470–490 (IIIYLLVIFIVMMNLWIWNII).

Belongs to the ADP/ATP translocase tlc family.

The protein localises to the cell membrane. Provides the rickettsial cell with host ATP in exchange for rickettsial ADP. This is an obligate exchange system. This energy acquiring activity is an important component of rickettsial parasitism. The protein is ADP,ATP carrier protein 3 (tlcC) of Rickettsia typhi (strain ATCC VR-144 / Wilmington).